The primary structure comprises 158 residues: Large ribosomal subunit protein bL21 (158 aa).

Residues 127-158 are disordered; it reads TQETKSAASVKKAAKKSAPQKQAAVASNSKED. Residues 131 to 158 show a composition bias toward low complexity; that stretch reads KSAASVKKAAKKSAPQKQAAVASNSKED.

This sequence belongs to the bacterial ribosomal protein bL21 family. As to quaternary structure, part of the 50S ribosomal subunit. Contacts protein L20.

Functionally, this protein binds to 23S rRNA in the presence of protein L20. In Bartonella henselae (strain ATCC 49882 / DSM 28221 / CCUG 30454 / Houston 1) (Rochalimaea henselae), this protein is Large ribosomal subunit protein bL21.